A 330-amino-acid chain; its full sequence is MLSKQRVVITSGEPAGIGPDLVVQLAQQDWPVELVVCADPELLRDRAAVLRLPLTLREYQPGTDAQPQQAGSLTVLPAHLAQPVNAGELCVDNSHYVLETLARACDGCLSGEFAALITGPVHKGAINDAGIPFSGHTEFFAERARCERVVMMLATEELRVALATTHLPLKDVAASITRTTLHEVITILYQDLQSKFGRAEPHIFVCGLNPHAGEGGHMGREEIDVIIPALDELRQQGMKLTGPLPADTLFQPKYLQHADAVLAMYHDQGLPVLKYQGFGRAVNITLGLPFIRTSVDHGTALELAGSGQADAGSFKTALNLAITMIKSSNE.

Substrate-binding residues include His-136 and Thr-137. His-166, His-211, and His-266 together coordinate a divalent metal cation. Substrate is bound by residues Lys-274, Asn-283, and Arg-292.

It belongs to the PdxA family. In terms of assembly, homodimer. Requires Zn(2+) as cofactor. Mg(2+) is required as a cofactor. It depends on Co(2+) as a cofactor.

The protein localises to the cytoplasm. The enzyme catalyses 4-(phosphooxy)-L-threonine + NAD(+) = 3-amino-2-oxopropyl phosphate + CO2 + NADH. Its pathway is cofactor biosynthesis; pyridoxine 5'-phosphate biosynthesis; pyridoxine 5'-phosphate from D-erythrose 4-phosphate: step 4/5. Catalyzes the NAD(P)-dependent oxidation of 4-(phosphooxy)-L-threonine (HTP) into 2-amino-3-oxo-4-(phosphooxy)butyric acid which spontaneously decarboxylates to form 3-amino-2-oxopropyl phosphate (AHAP). The polypeptide is 4-hydroxythreonine-4-phosphate dehydrogenase (Erwinia tasmaniensis (strain DSM 17950 / CFBP 7177 / CIP 109463 / NCPPB 4357 / Et1/99)).